The following is a 219-amino-acid chain: MKSFTGTTQKCTVCEKTVYLVDKLVANQRVYHKACFRCHHCNSTLKLSNFNSFDGVVYCRHHFDQLFKRTGSLEKSFDGTPKFKPERTFSQETQSANRLSSFFEGTRDKCNACAKIVYPIERVKVDGTAYHRACFKCCHGGCTISPSNYIAHEGRLYCKHHHIQLFKKKGNYSQLEVEETVAAPAESETQNTETQNAETQNADTQNADTQNTETQNGSV.

LIM zinc-binding domains lie at 9–109 (QKCT…TRDK) and 110–167 (CNAC…QLFK). The tract at residues 181–219 (VAAPAESETQNTETQNAETQNADTQNADTQNTETQNGSV) is disordered. A compositionally biased stretch (low complexity) spans 185–202 (AESETQNTETQNAETQNA). Over residues 203–219 (DTQNADTQNTETQNGSV) the composition is skewed to polar residues.

Pollen.

Its function is as follows. Could possibly involved in controlling pollen-specific processes such as male gamete maturation, pollen tube formation, or even fertilization. In Helianthus annuus (Common sunflower), this protein is Pollen-specific protein SF3 (SF3).